Consider the following 159-residue polypeptide: SsrA-binding protein (159 aa).

This sequence belongs to the SmpB family.

The protein resides in the cytoplasm. In terms of biological role, required for rescue of stalled ribosomes mediated by trans-translation. Binds to transfer-messenger RNA (tmRNA), required for stable association of tmRNA with ribosomes. tmRNA and SmpB together mimic tRNA shape, replacing the anticodon stem-loop with SmpB. tmRNA is encoded by the ssrA gene; the 2 termini fold to resemble tRNA(Ala) and it encodes a 'tag peptide', a short internal open reading frame. During trans-translation Ala-aminoacylated tmRNA acts like a tRNA, entering the A-site of stalled ribosomes, displacing the stalled mRNA. The ribosome then switches to translate the ORF on the tmRNA; the nascent peptide is terminated with the 'tag peptide' encoded by the tmRNA and targeted for degradation. The ribosome is freed to recommence translation, which seems to be the essential function of trans-translation. The protein is SsrA-binding protein of Acidothermus cellulolyticus (strain ATCC 43068 / DSM 8971 / 11B).